Here is a 451-residue protein sequence, read N- to C-terminus: Phosphoglucosamine mutase (451 aa).

The active-site Phosphoserine intermediate is the Ser-101. Mg(2+) is bound by residues Ser-101, Asp-240, Asp-242, and Asp-244. Ser-101 carries the phosphoserine modification.

Belongs to the phosphohexose mutase family. Mg(2+) serves as cofactor. In terms of processing, activated by phosphorylation.

It catalyses the reaction alpha-D-glucosamine 1-phosphate = D-glucosamine 6-phosphate. In terms of biological role, catalyzes the conversion of glucosamine-6-phosphate to glucosamine-1-phosphate. In Streptococcus pyogenes serotype M18 (strain MGAS8232), this protein is Phosphoglucosamine mutase.